A 260-amino-acid polypeptide reads, in one-letter code: Phosphate import ATP-binding protein PstB 1 (260 aa).

The 243-residue stretch at 13 to 255 (ISARDLNVHY…PQHPLTQGYI (243 aa)) folds into the ABC transporter domain. 45–52 (GPSGCGKS) provides a ligand contact to ATP.

The protein belongs to the ABC transporter superfamily. Phosphate importer (TC 3.A.1.7) family. The complex is composed of two ATP-binding proteins (PstB), two transmembrane proteins (PstC and PstA) and a solute-binding protein (PstS).

The protein resides in the cell inner membrane. It catalyses the reaction phosphate(out) + ATP + H2O = ADP + 2 phosphate(in) + H(+). Part of the ABC transporter complex PstSACB involved in phosphate import. Responsible for energy coupling to the transport system. The chain is Phosphate import ATP-binding protein PstB 1 from Paramagnetospirillum magneticum (strain ATCC 700264 / AMB-1) (Magnetospirillum magneticum).